The chain runs to 357 residues: P2Y purinoceptor 8 (357 aa).

Over 1–26 (MVKNGSHLDAETLAMLQNKAISITLP) the chain is Extracellular. An N-linked (GlcNAc...) asparagine glycan is attached at Asn4. Residues 27-47 (VVYTMVAIISIPGNFFSLWVL) form a helical membrane-spanning segment. Residues 48–56 (CWHIKPKTP) lie on the Cytoplasmic side of the membrane. Residues 57-77 (SVIFMINLSITDLLLACCFPF) form a helical membrane-spanning segment. Residues 78–97 (QIFYHIQRNHWIFGKTLCSL) lie on the Extracellular side of the membrane. Cys95 and Cys174 are oxidised to a cystine. A helical membrane pass occupies residues 98 to 118 (VTVMFYSNMYSSILTMTCISI). Topologically, residues 119-137 (ERYMGVVYPMKLIKWRRKR) are cytoplasmic. The helical transmembrane segment at 138–158 (YALGACVIMWIFLLLAFYPLE) threads the bilayer. At 159–185 (STDLTYEVKELGIITCFDVLKWEMLPN) the chain is on the extracellular side. A helical membrane pass occupies residues 186–206 (FAAWVAFLLTLFVVLFLIPFI). The Cytoplasmic segment spans residues 207-236 (VTVGCYIGTIRKLIQTSSRYGNKQKTRSIY). The chain crosses the membrane as a helical span at residues 237 to 257 (LAIIVLSVFITCFAPNNFILL). The Extracellular portion of the chain corresponds to 258–271 (AHMIVRLFYEGSLY). The helical transmembrane segment at 272-294 (PAYKLTLCLSCLNNCIDPFIYYF) threads the bilayer. Residues 295 to 357 (ASKEFYQKFM…ICLQRQESVF (63 aa)) are Cytoplasmic-facing.

It belongs to the G-protein coupled receptor 1 family.

The protein localises to the cell membrane. Functionally, probable receptor for purines coupled to G-proteins. The protein is P2Y purinoceptor 8 (P2RY8) of Gallus gallus (Chicken).